A 657-amino-acid polypeptide reads, in one-letter code: MGVEVPPEESNRCVRGCCRSAAIPLHLPPSSFSLLSPIAKGSESTVYEARLGGERVAAKKPVLSTSDDLDKFHYQLQLLWWVLPIELDHPGLARLVAAHARPPNYLMFFDFFEPPNLADKIHVEEWNPSVQQVVTIATDLAKALQYLNILGIVHRDIKPANILIDKDFHPHLADFGLAMYQKDIKHVSVENWRSSGKPTGGFHKKNMVGTLIYMAPEILRKDIHTEKSDVYSFAISINELLTGVVPYTDLRAEAQAHTVLEMTYTEQQLTAAIVSQGLRPALALPESGAPPSLLSLIQRCWDSDPQQRPSFKDITEELKIIEKHIAVNSCSLASPANKSQNGNTEVHHYQEALSWLNQGELFAKGNKLDSTVDHWSDIFDQSSKYCPTLSWGSFATCGRRETMEDTHFMLPHMSEEKDLHAFGIFDGHRGSAAAEFSVRAVPGFLKQFNSNTSPTDALTEAFVRTDIAFREELILHQKSKRITQKNWHPGCTAVTALIVRNKLFVANAGDCRAILNRAGEPFPMTRDHVASCPKERERIVKEGTEVKWQIDTWRVGAAALQVTRSIGDDDLKPAVTAQPEVIETILSPDDEFLVMASDGLWDVMSNEDVLSIIKDTVKEPGMCSKRLATEAAARGSKDNITVIVVFLRPVSTAERIY.

A Protein kinase domain is found at 32 to 327 (FSLLSPIAKG…LKIIEKHIAV (296 aa)). ATP is bound by residues 38 to 46 (IAKGSESTV) and Lys59. Asp156 serves as the catalytic Proton acceptor; for kinase activity. The region spanning 390–647 (SWGSFATCGR…DNITVIVVFL (258 aa)) is the PPM-type phosphatase domain. Mn(2+)-binding residues include Asp426, Gly427, Asp598, and Asp638.

The protein in the N-terminal section; belongs to the protein kinase superfamily. Ser/Thr protein kinase family. It in the C-terminal section; belongs to the PP2C family. Mg(2+) is required as a cofactor. Mn(2+) serves as cofactor.

The enzyme catalyses L-seryl-[protein] + ATP = O-phospho-L-seryl-[protein] + ADP + H(+). The catalysed reaction is L-threonyl-[protein] + ATP = O-phospho-L-threonyl-[protein] + ADP + H(+). It carries out the reaction O-phospho-L-seryl-[protein] + H2O = L-seryl-[protein] + phosphate. It catalyses the reaction O-phospho-L-threonyl-[protein] + H2O = L-threonyl-[protein] + phosphate. This chain is Protein kinase and PP2C-like domain-containing protein, found in Oryza sativa subsp. japonica (Rice).